A 166-amino-acid chain; its full sequence is 2-amino-4-hydroxy-6-hydroxymethyldihydropteridine pyrophosphokinase (166 aa).

This sequence belongs to the HPPK family.

It catalyses the reaction 6-hydroxymethyl-7,8-dihydropterin + ATP = (7,8-dihydropterin-6-yl)methyl diphosphate + AMP + H(+). It functions in the pathway cofactor biosynthesis; tetrahydrofolate biosynthesis; 2-amino-4-hydroxy-6-hydroxymethyl-7,8-dihydropteridine diphosphate from 7,8-dihydroneopterin triphosphate: step 4/4. Its function is as follows. Catalyzes the transfer of pyrophosphate from adenosine triphosphate (ATP) to 6-hydroxymethyl-7,8-dihydropterin, an enzymatic step in folate biosynthesis pathway. The chain is 2-amino-4-hydroxy-6-hydroxymethyldihydropteridine pyrophosphokinase (folK) from Streptococcus pyogenes serotype M18 (strain MGAS8232).